The following is a 331-amino-acid chain: Putative mitochondrial 2-oxoglutarate/malate carrier protein (331 aa).

Solcar repeat units lie at residues 39–128, 140–231, and 239–329; these read VRAA…FMSR, VGFK…AKAQ, and SSKV…LGWL. 6 helical membrane-spanning segments follow: residues 42–62, 103–121, 148–168, 199–219, 245–265, and 309–329; these read ALPF…IQPI, GLSA…RIGC, AGLA…LALI, GVAA…ALNF, LSAS…FDFV, and YVRI…LGWL.

Belongs to the mitochondrial carrier (TC 2.A.29) family.

The protein resides in the mitochondrion inner membrane. Its function is as follows. Catalyzes the transport of 2-oxoglutarate across the inner mitochondrial membrane. This is Putative mitochondrial 2-oxoglutarate/malate carrier protein (mic-33) from Neurospora crassa (strain ATCC 24698 / 74-OR23-1A / CBS 708.71 / DSM 1257 / FGSC 987).